The sequence spans 855 residues: Mitochondrial 15S rRNA processing factor CCM1 (855 aa).

A disordered region spans residues 29–61 (PTAMRTRRRTRRHEREPNLRKRQGGSHSNLKEN). PPR repeat units follow at residues 234-265 (DVDM…MKKL), 317-351 (NKVN…SLSH), and 354-388 (DVAT…KMEP).

Belongs to the CCM1 family. As to quaternary structure, binds to mitochondrial small subunit 15S rRNA.

It localises to the mitochondrion. Its function is as follows. Regulates mitochondrial small subunit maturation by controlling 15S rRNA 5'-end processing. Localizes to the 5' precursor of the 15S rRNA in a position that is subsequently occupied by mS47 in the mature yeast mtSSU. Uses structure and sequence-specific RNA recognition, binding to a single-stranded region of the precursor and specifically recognizing bases -6 to -1. The exchange of Ccm1 for mS47 is coupled to the irreversible removal of precursor rRNA that is accompanied by conformational changes of the mitoribosomal proteins uS5m and mS26. These conformational changes signal completion of 5'-end rRNA processing through protection of the mature 5'-end of the 15S rRNA and stabilization of mS47. The removal of the 5' precursor together with the dissociation of Ccm1 may be catalyzed by the 5'-3' exoribonuclease Pet127. Involved in the specific removal of group I introns in mitochondrial encoded transcripts. This chain is Mitochondrial 15S rRNA processing factor CCM1 (CCM1), found in Eremothecium gossypii (strain ATCC 10895 / CBS 109.51 / FGSC 9923 / NRRL Y-1056) (Yeast).